Consider the following 111-residue polypeptide: Ig kappa chain V-III region PC 2880/PC 1229 (111 aa).

Positions 1–23 (DIVLTQSPASLAVSLGQRATISC) are framework-1. A disulfide bridge links Cys23 with Cys92. The segment at 24 to 38 (RASESVDNYGISFMN) is complementarity-determining-1. A framework-2 region spans residues 39–53 (WFQQKPGQPPKLLIY). The segment at 54-60 (AASNQGS) is complementarity-determining-2. Residues 61–92 (GVPARFSGSGSGTDFSLNIHPMEEDDTAMYFC) form a framework-3 region. The segment at 93–101 (QQSKEVPWT) is complementarity-determining-3. The interval 102 to 111 (FGGGTKLEIK) is framework-4.

This chain is Ig kappa chain V-III region PC 2880/PC 1229, found in Mus musculus (Mouse).